The sequence spans 266 residues: Undecaprenyl-diphosphatase (266 aa).

Transmembrane regions (helical) follow at residues 1–21, 39–59, 83–103, 111–131, 149–169, 183–203, 218–238, and 246–266; these read MDTLQVIILALIQGLTEFLPI, QGLSFDVAVHIGSLAAVVIYF, SKLAWWIILATIPAIGVGFTA, LRGPGVIAITTVIFGLLLWFA, ALLIGVAQALALIPGTSRSGI, AAARFSFLMSIPVILGAALLM, ALALGSILSFIAAYACIYFFL, and MTPFVIYRIALGVFLCGFIYL.

Belongs to the UppP family.

It is found in the cell inner membrane. The enzyme catalyses di-trans,octa-cis-undecaprenyl diphosphate + H2O = di-trans,octa-cis-undecaprenyl phosphate + phosphate + H(+). Catalyzes the dephosphorylation of undecaprenyl diphosphate (UPP). Confers resistance to bacitracin. The polypeptide is Undecaprenyl-diphosphatase (Shewanella amazonensis (strain ATCC BAA-1098 / SB2B)).